Reading from the N-terminus, the 366-residue chain is Chorismate synthase (366 aa).

R47 serves as a coordination point for NADP(+). FMN contacts are provided by residues 124-126, G286, 301-305, and R327; these read RSS and KPVAT.

The protein belongs to the chorismate synthase family. In terms of assembly, homotetramer. FMNH2 serves as cofactor.

It catalyses the reaction 5-O-(1-carboxyvinyl)-3-phosphoshikimate = chorismate + phosphate. It functions in the pathway metabolic intermediate biosynthesis; chorismate biosynthesis; chorismate from D-erythrose 4-phosphate and phosphoenolpyruvate: step 7/7. Its function is as follows. Catalyzes the anti-1,4-elimination of the C-3 phosphate and the C-6 proR hydrogen from 5-enolpyruvylshikimate-3-phosphate (EPSP) to yield chorismate, which is the branch point compound that serves as the starting substrate for the three terminal pathways of aromatic amino acid biosynthesis. This reaction introduces a second double bond into the aromatic ring system. The sequence is that of Chorismate synthase from Methylacidiphilum infernorum (isolate V4) (Methylokorus infernorum (strain V4)).